The following is a 357-amino-acid chain: BLOC-1-related complex subunit 6 (357 aa).

Positions 20–196 (HQALVFGGGP…SGAGGGRRAT (177 aa)) are disordered. The segment covering 90-99 (GAGSRRGAPG) has biased composition (low complexity). Over residues 138-149 (EQQEEEDNDEEA) the composition is skewed to acidic residues. Positions 150–162 (AAGSRAGRSFSSR) are enriched in low complexity. S168 bears the Phosphoserine mark. Position 196 is a phosphothreonine (T196). Position 199 is a phosphoserine (S199). Residues 227–256 (LSGAPPPPPSAPARPCPAPAPTPTPAIPPI) form a disordered region. The segment covering 230–256 (APPPPPSAPARPCPAPAPTPTPAIPPI) has biased composition (pro residues).

Belongs to the BORCS6 family. In terms of assembly, component of the BLOC-one-related complex (BORC) which is composed of BLOC1S1, BLOC1S2, BORCS5, BORCS6, BORCS7, BORCS8, KXD1 and SNAPIN.

The protein resides in the lysosome membrane. Functionally, as part of the BORC complex may play a role in lysosomes movement and localization at the cell periphery. Associated with the cytosolic face of lysosomes, the BORC complex may recruit ARL8B and couple lysosomes to microtubule plus-end-directed kinesin motor. In Homo sapiens (Human), this protein is BLOC-1-related complex subunit 6.